The primary structure comprises 67 residues: uncharacterized protein (67 aa).

This is an uncharacterized protein from Enterobacteria phage T4 (Bacteriophage T4).